A 31-amino-acid chain; its full sequence is MAPPSIFAEVPQAQPVLVFKLTADFREDPDP.

This sequence belongs to the class-I pyridoxal-phosphate-dependent aminotransferase family. In terms of assembly, homodimer. The cofactor is pyridoxal 5'-phosphate.

Its subcellular location is the cytoplasm. It carries out the reaction L-aspartate + 2-oxoglutarate = oxaloacetate + L-glutamate. The enzyme catalyses L-cysteine + 2-oxoglutarate = 2-oxo-3-sulfanylpropanoate + L-glutamate. It catalyses the reaction (2S)-2-aminobutanoate + 2-oxoglutarate = 2-oxobutanoate + L-glutamate. The catalysed reaction is 3-sulfino-L-alanine + 2-oxoglutarate = 3-sulfinopyruvate + L-glutamate. In terms of biological role, biosynthesis of L-glutamate from L-aspartate or L-cysteine. Important regulator of levels of glutamate, the major excitatory neurotransmitter of the vertebrate central nervous system. Acts as a scavenger of glutamate in brain neuroprotection. The aspartate aminotransferase activity is involved in hepatic glucose synthesis during development and in adipocyte glyceroneogenesis. Using L-cysteine as substrate, regulates levels of mercaptopyruvate, an important source of hydrogen sulfide. Mercaptopyruvate is converted into H(2)S via the action of 3-mercaptopyruvate sulfurtransferase (3MST). Hydrogen sulfide is an important synaptic modulator and neuroprotectant in the brain. This Oryctolagus cuniculus (Rabbit) protein is Aspartate aminotransferase, cytoplasmic.